A 112-amino-acid chain; its full sequence is Thioredoxin (112 aa).

One can recognise a Thioredoxin domain in the interval 2 to 112 (SEDSATVAVT…ALLRELSDAL (111 aa)). An intrachain disulfide couples Cys-35 to Cys-38.

Belongs to the thioredoxin family.

In terms of biological role, participates in various redox reactions through the reversible oxidation of its active center dithiol to a disulfide and catalyzes dithiol-disulfide exchange reactions. This chain is Thioredoxin (trxA), found in Mycolicibacterium smegmatis (Mycobacterium smegmatis).